The sequence spans 368 residues: tRNA-specific 2-thiouridylase MnmA (368 aa).

Residues 11–18 (GMSGGVDS) and M37 contribute to the ATP site. The tract at residues 97 to 99 (NPD) is interaction with target base in tRNA. C102 acts as the Nucleophile in catalysis. An intrachain disulfide couples C102 to C199. Residue G127 participates in ATP binding. An interaction with tRNA region spans residues 149–151 (KDQ). Catalysis depends on C199, which acts as the Cysteine persulfide intermediate. The tract at residues 311-312 (RY) is interaction with tRNA.

The protein belongs to the MnmA/TRMU family. Interacts with TusE.

It localises to the cytoplasm. It catalyses the reaction S-sulfanyl-L-cysteinyl-[protein] + uridine(34) in tRNA + AH2 + ATP = 2-thiouridine(34) in tRNA + L-cysteinyl-[protein] + A + AMP + diphosphate + H(+). Catalyzes the 2-thiolation of uridine at the wobble position (U34) of tRNA(Lys), tRNA(Glu) and tRNA(Gln), leading to the formation of s(2)U34, the first step of tRNA-mnm(5)s(2)U34 synthesis. Sulfur is provided by IscS, via a sulfur-relay system. Binds ATP and its substrate tRNAs. The polypeptide is tRNA-specific 2-thiouridylase MnmA (Salmonella choleraesuis (strain SC-B67)).